The sequence spans 294 residues: Equatorin (294 aa).

An N-terminal signal peptide occupies residues 1–14 (MNFILFIFIPGVFS). Topologically, residues 15-181 (LKSSTLKPTI…QPDLEDLKIK (167 aa)) are vesicular. N76 is a glycosylation site (N-linked (GlcNAc...) asparagine). Residues 107–126 (KSTIEEETTTSEPSHKNIQR) form a disordered region. N-linked (GlcNAc...) asparagine glycosylation is present at N143. Residues 182-202 (IMLGISLMTLLLFVVLLAFCS) traverse the membrane as a helical segment. Residues 203–294 (ATLYKLRHLS…MHENDESVTR (92 aa)) are Cytoplasmic-facing.

In terms of assembly, interacts with SNAP25. In terms of processing, highly N- and O-glycosylated; contains sialic acid. Isoform 1 is highly expressed in testis. Isoform 2 is expressed at low levels in skin and blood.

The protein localises to the cytoplasmic vesicle. The protein resides in the secretory vesicle. Its subcellular location is the acrosome membrane. It is found in the acrosome inner membrane. It localises to the acrosome outer membrane. In terms of biological role, acrosomal membrane-anchored protein involved in the process of fertilization and in acrosome biogenesis. The polypeptide is Equatorin (EQTN) (Homo sapiens (Human)).